The chain runs to 148 residues: SsrA-binding protein (148 aa).

The protein belongs to the SmpB family.

The protein resides in the cytoplasm. Its function is as follows. Required for rescue of stalled ribosomes mediated by trans-translation. Binds to transfer-messenger RNA (tmRNA), required for stable association of tmRNA with ribosomes. tmRNA and SmpB together mimic tRNA shape, replacing the anticodon stem-loop with SmpB. tmRNA is encoded by the ssrA gene; the 2 termini fold to resemble tRNA(Ala) and it encodes a 'tag peptide', a short internal open reading frame. During trans-translation Ala-aminoacylated tmRNA acts like a tRNA, entering the A-site of stalled ribosomes, displacing the stalled mRNA. The ribosome then switches to translate the ORF on the tmRNA; the nascent peptide is terminated with the 'tag peptide' encoded by the tmRNA and targeted for degradation. The ribosome is freed to recommence translation, which seems to be the essential function of trans-translation. The polypeptide is SsrA-binding protein (Ehrlichia ruminantium (strain Welgevonden)).